The primary structure comprises 502 residues: Maturase K (502 aa).

The protein belongs to the intron maturase 2 family. MatK subfamily.

It is found in the plastid. The protein resides in the chloroplast. In terms of biological role, usually encoded in the trnK tRNA gene intron. Probably assists in splicing its own and other chloroplast group II introns. The sequence is that of Maturase K from Spiraea cantoniensis (Reeve's meadowsweet).